The primary structure comprises 64 residues: Potassium channel toxin kappa-KTx 4.1 (64 aa).

An N-terminal signal peptide occupies residues 1 to 26 (MKSTLMTASLLILVVLFIIDYASVYA). Residues 27–38 (EFIDGEISLERE) constitute a propeptide that is removed on maturation. Disulfide bonds link cysteine 43-cysteine 61 and cysteine 47-cysteine 57.

The protein belongs to the short scorpion toxin superfamily. Potassium channel inhibitor kappa-KTx family. Kappa-KTx 4 subfamily. As to expression, expressed by the venom gland.

The protein localises to the secreted. In terms of biological role, potassium channel inhibitor (Kv). The chain is Potassium channel toxin kappa-KTx 4.1 from Heterometrus petersii (Asian forest scorpion).